Here is a 225-residue protein sequence, read N- to C-terminus: Putative N-acetylmannosamine-6-phosphate 2-epimerase (225 aa).

It belongs to the NanE family.

It carries out the reaction an N-acyl-D-glucosamine 6-phosphate = an N-acyl-D-mannosamine 6-phosphate. Its pathway is amino-sugar metabolism; N-acetylneuraminate degradation; D-fructose 6-phosphate from N-acetylneuraminate: step 3/5. Its function is as follows. Converts N-acetylmannosamine-6-phosphate (ManNAc-6-P) to N-acetylglucosamine-6-phosphate (GlcNAc-6-P). The sequence is that of Putative N-acetylmannosamine-6-phosphate 2-epimerase from Vibrio vulnificus (strain CMCP6).